We begin with the raw amino-acid sequence, 135 residues long: Germinal center-associated signaling and motility-like protein (135 aa).

The interval 1–68 (MGNYLLRKLS…ENGSGSEEVC (68 aa)) is disordered. The segment covering 22–48 (GNPDEERKRQEMTTFERKLQDQDKKSQ) has biased composition (basic and acidic residues). Residues 26–50 (EERKRQEMTTFERKLQDQDKKSQEV) adopt a coiled-coil conformation. Low complexity predominate over residues 51-66 (SSTSNQENENGSGSEE).

This Homo sapiens (Human) protein is Germinal center-associated signaling and motility-like protein (GCSAML).